We begin with the raw amino-acid sequence, 971 residues long: MAFSVVLHPAFLLAVLSLRASRSEVLEEPLPLTPEIHKVSFQLKLQEVNLEWTVPALTHEELNMIFQIEISRLNISNTIWVENYSTTVKREEAVRWNWTSDIPLECVKHFIRIRALVDDTKSLPQSSWGNWSSWKEVNAKVSVEPDKSLIFPKDKVLEEGSNVTICLMYGQNVYNVSCKLQDEPIHGEQLDSHVSLLKLNNVVFLSDTGTNINCQATKGPKRIFGTVLFVSKVLEEPKNVSCETRDFKTLDCSWEPGVDTTLTWRKQRFQNYTLCESFSKRCEVSNYRNSYTWQITEGSQEMYNFTLTAENQLRKRSVNINFNLTHRVHPKAPQDVTLKIIGATKANMTWKVHSHGNNYTLLCQVKLQYGEVIHEHNVSVHMSANYLFSDLDPDTKYKAFVRCASANHFWKWSDWTQKEFSTPETAPSQALDVWRQVWSENGRRIVTLFWKPLLKSQANGKIISYNIVVENEAKPTESEHYCVWAPALSTNLSLDLQPYKIRITTNNSMGASPESLMVLSNDSGHEEVKEKTIKGIKDAFNISWEPVSGDTMGYVVDWCAHSQDQRCDLQWKNLGPNTTSTTITSDDFKPGVRYNFRIFERSVEHKARLVEKQRGYTQELAPLVNPKVEIPYSTPNSFVLRWPDYDSDFQAGFIKGYLVYVKSKEMQCNQPWERTLLPDNSVLCKYDINGSETKTLTVENLQPESLYEFFVTPYTSAGPGPNETFTKVTTPDARSHMLLQIILPMTLCVLLSIIVCYWKSQWVKEKCYPDIPNPYKSSILSLIKSKKNPHLIMNVKDCIPDVLEVINKAEGSKTQCVGSGKLHIEDVPTKPPIVPTEKDSSGPVPCIFFENFTYDQSAFDSGSHGLIPGPLKDTAHQLGLLAPPNKFQNVLKNDYMKPLVESPTEETSLIYVSQLASPMCGDKDTLATEPPVPVHGSEYKRQMVVPGSLASPSLKEDNSLTSTVLLGQGEQ.

The signal sequence occupies residues M1–S23. Residues E24–M737 lie on the Extracellular side of the membrane. 5 N-linked (GlcNAc...) asparagine glycosylation sites follow: N74, N97, N130, N162, and N239. C242 and C252 are joined by a disulfide. 4 N-linked (GlcNAc...) asparagine glycosylation sites follow: N271, N304, N323, and N377. Fibronectin type-III domains follow at residues A332 to T425, P427 to S523, G524 to L620, and P622 to A733. Positions W412–T416 match the WSXWS motif motif. N-linked (GlcNAc...) asparagine glycans are attached at residues N491, N541, N577, N689, and N722. The helical transmembrane segment at L738–W758 threads the bilayer. The Cytoplasmic segment spans residues K759 to Q971. A Box 1 motif motif is present at residues C767–Y775. A disordered region spans residues L949–Q971. Over residues S959–Q971 the composition is skewed to polar residues.

It belongs to the type I cytokine receptor family. Type 2 subfamily. Heterodimer composed of OSMR and IL6ST (type II OSM receptor). Heterodimer with IL31RA to form the IL31 receptor. As to expression, widely expressed. Expressed at highest levels in the lung, heart, thymus and spleen. Expressed in dorsal root ganglia.

It localises to the membrane. Its function is as follows. Associates with IL31RA to form the IL31 receptor. Binds IL31 to activate STAT3 and possibly STAT1 and STAT5. Capable of transducing OSM-specific signaling events. The polypeptide is Oncostatin-M-specific receptor subunit beta (Osmr) (Mus musculus (Mouse)).